Here is a 55-residue protein sequence, read N- to C-terminus: ATP synthase F(0) complex subunit 8 (55 aa).

A helical transmembrane segment spans residues 7-24; that stretch reads SPWFFIMLTTWLTFSLII.

It belongs to the ATPase protein 8 family. In terms of assembly, component of the ATP synthase complex composed at least of ATP5F1A/subunit alpha, ATP5F1B/subunit beta, ATP5MC1/subunit c (homooctomer), MT-ATP6/subunit a, MT-ATP8/subunit 8, ATP5ME/subunit e, ATP5MF/subunit f, ATP5MG/subunit g, ATP5MK/subunit k, ATP5MJ/subunit j, ATP5F1C/subunit gamma, ATP5F1D/subunit delta, ATP5F1E/subunit epsilon, ATP5PF/subunit F6, ATP5PB/subunit b, ATP5PD/subunit d, ATP5PO/subunit OSCP. ATP synthase complex consists of a soluble F(1) head domain (subunits alpha(3) and beta(3)) - the catalytic core - and a membrane F(0) domain - the membrane proton channel (subunits c, a, 8, e, f, g, k and j). These two domains are linked by a central stalk (subunits gamma, delta, and epsilon) rotating inside the F1 region and a stationary peripheral stalk (subunits F6, b, d, and OSCP).

The protein localises to the mitochondrion membrane. Functionally, subunit 8, of the mitochondrial membrane ATP synthase complex (F(1)F(0) ATP synthase or Complex V) that produces ATP from ADP in the presence of a proton gradient across the membrane which is generated by electron transport complexes of the respiratory chain. ATP synthase complex consist of a soluble F(1) head domain - the catalytic core - and a membrane F(1) domain - the membrane proton channel. These two domains are linked by a central stalk rotating inside the F(1) region and a stationary peripheral stalk. During catalysis, ATP synthesis in the catalytic domain of F(1) is coupled via a rotary mechanism of the central stalk subunits to proton translocation. In vivo, can only synthesize ATP although its ATP hydrolase activity can be activated artificially in vitro. Part of the complex F(0) domain. This is ATP synthase F(0) complex subunit 8 from Columbina passerina (Common ground-dove).